Here is a 301-residue protein sequence, read N- to C-terminus: tRNA dimethylallyltransferase (301 aa).

An ATP-binding site is contributed by 9-16; sequence GPTASGKS. 11-16 contacts substrate; the sequence is TASGKS. The interval 34-37 is interaction with substrate tRNA; the sequence is DSMQ.

This sequence belongs to the IPP transferase family. As to quaternary structure, monomer. Mg(2+) serves as cofactor.

The enzyme catalyses adenosine(37) in tRNA + dimethylallyl diphosphate = N(6)-dimethylallyladenosine(37) in tRNA + diphosphate. In terms of biological role, catalyzes the transfer of a dimethylallyl group onto the adenine at position 37 in tRNAs that read codons beginning with uridine, leading to the formation of N6-(dimethylallyl)adenosine (i(6)A). The protein is tRNA dimethylallyltransferase of Corynebacterium glutamicum (strain ATCC 13032 / DSM 20300 / JCM 1318 / BCRC 11384 / CCUG 27702 / LMG 3730 / NBRC 12168 / NCIMB 10025 / NRRL B-2784 / 534).